The sequence spans 191 residues: Protein GrpE (191 aa).

A compositionally biased stretch (basic and acidic residues) spans 1–11 (MTDSSNAHEAE). 2 disordered regions span residues 1–22 (MTDS…DNEI) and 172–191 (KVSK…NNNE).

It belongs to the GrpE family. In terms of assembly, homodimer.

Its subcellular location is the cytoplasm. In terms of biological role, participates actively in the response to hyperosmotic and heat shock by preventing the aggregation of stress-denatured proteins, in association with DnaK and GrpE. It is the nucleotide exchange factor for DnaK and may function as a thermosensor. Unfolded proteins bind initially to DnaJ; upon interaction with the DnaJ-bound protein, DnaK hydrolyzes its bound ATP, resulting in the formation of a stable complex. GrpE releases ADP from DnaK; ATP binding to DnaK triggers the release of the substrate protein, thus completing the reaction cycle. Several rounds of ATP-dependent interactions between DnaJ, DnaK and GrpE are required for fully efficient folding. In Chlamydia abortus (strain DSM 27085 / S26/3) (Chlamydophila abortus), this protein is Protein GrpE.